The following is a 308-amino-acid chain: Membrane protein insertase YidC 1 (308 aa).

A signal peptide spans 1–22 (MKSIKRFALSAMGAAMLLVLTG). The N-palmitoyl cysteine moiety is linked to residue Cys23. Cys23 carries the S-diacylglycerol cysteine lipid modification. A run of 5 helical transmembrane segments spans residues 60-80 (FGVAIIIVTIIVRLIILPLGI), 135-155 (FGGVGCFPILLQMPFFSAIYF), 168-188 (YLGIPLGSPSMILVACAGVLY), 211-225 (MIYMSPLMIVVFSLF), and 230-252 (VTLYWVVGGFMMILQQFIVNYIV). A disordered region spans residues 263-308 (ELAKNPSKASAFSTPSGRKDVTPEQPTAITSKKKHKNRNAGKQRSR). Polar residues predominate over residues 269–278 (SKASAFSTPS). Positions 293–308 (SKKKHKNRNAGKQRSR) are enriched in basic residues.

The protein belongs to the OXA1/ALB3/YidC family. Type 2 subfamily.

It localises to the cell membrane. Functionally, required for the insertion and/or proper folding and/or complex formation of integral membrane proteins into the membrane. Involved in integration of membrane proteins that insert both dependently and independently of the Sec translocase complex, as well as at least some lipoproteins. This is Membrane protein insertase YidC 1 from Streptococcus pneumoniae (strain ATCC BAA-255 / R6).